Consider the following 121-residue polypeptide: Large ribosomal subunit protein bL12 (121 aa).

The protein belongs to the bacterial ribosomal protein bL12 family. In terms of assembly, homodimer. Part of the ribosomal stalk of the 50S ribosomal subunit. Forms a multimeric L10(L12)X complex, where L10 forms an elongated spine to which 2 to 4 L12 dimers bind in a sequential fashion. Binds GTP-bound translation factors.

Functionally, forms part of the ribosomal stalk which helps the ribosome interact with GTP-bound translation factors. Is thus essential for accurate translation. The polypeptide is Large ribosomal subunit protein bL12 (Pediococcus pentosaceus (strain ATCC 25745 / CCUG 21536 / LMG 10740 / 183-1w)).